The chain runs to 126 residues: Profilin-3 (126 aa).

It belongs to the profilin family. As to quaternary structure, occurs in many kinds of cells as a complex with monomeric actin in a 1:1 ratio.

The protein resides in the cytoplasm. It is found in the cytoskeleton. Binds to actin and affects the structure of the cytoskeleton. At high concentrations, profilin prevents the polymerization of actin, whereas it enhances it at low concentrations. By binding to PIP2, it inhibits the formation of IP3 and DG. In Dictyostelium discoideum (Social amoeba), this protein is Profilin-3 (proC).